A 389-amino-acid chain; its full sequence is Lipid-A-disaccharide synthase (389 aa).

The protein belongs to the LpxB family.

It catalyses the reaction a lipid X + a UDP-2-N,3-O-bis[(3R)-3-hydroxyacyl]-alpha-D-glucosamine = a lipid A disaccharide + UDP + H(+). It participates in bacterial outer membrane biogenesis; LPS lipid A biosynthesis. Condensation of UDP-2,3-diacylglucosamine and 2,3-diacylglucosamine-1-phosphate to form lipid A disaccharide, a precursor of lipid A, a phosphorylated glycolipid that anchors the lipopolysaccharide to the outer membrane of the cell. The sequence is that of Lipid-A-disaccharide synthase from Paraburkholderia phytofirmans (strain DSM 17436 / LMG 22146 / PsJN) (Burkholderia phytofirmans).